Consider the following 61-residue polypeptide: Large ribosomal subunit protein bL28 (61 aa).

The protein belongs to the bacterial ribosomal protein bL28 family.

This is Large ribosomal subunit protein bL28 from Geobacillus sp. (strain WCH70).